The primary structure comprises 514 residues: Peptide chain release factor 3 (514 aa).

The region spanning 8–268 (KKRRTFAIIS…TFLKFAPEPH (261 aa)) is the tr-type G domain. Residues 17 to 24 (SHPDAGKT), 85 to 89 (DTPGH), and 139 to 142 (NKLD) each bind GTP.

The protein belongs to the TRAFAC class translation factor GTPase superfamily. Classic translation factor GTPase family. PrfC subfamily.

Its subcellular location is the cytoplasm. Functionally, increases the formation of ribosomal termination complexes and stimulates activities of RF-1 and RF-2. It binds guanine nucleotides and has strong preference for UGA stop codons. It may interact directly with the ribosome. The stimulation of RF-1 and RF-2 is significantly reduced by GTP and GDP, but not by GMP. This is Peptide chain release factor 3 from Streptococcus thermophilus (strain CNRZ 1066).